The primary structure comprises 363 residues: MLKTTPLNAAHRGMHAKMVDFGGWDMPLHYGSQLDEHHAVRRDAGMFDVSHMLTVDLHGENVRQFLRGLVANNIDKLTVPGKALYTCMLNPAGGIIDDLIIYFLSESWFRLVVNAGTADKDIDWITLQSSQHAPDLTITPRRDLAMIAVQGPNARAKVWAVIPDSKAASEDLKPFQSVAFGNYFIARTGYTGEDGFEITLPADEAAAFWQKLHAAGVAPAGLGSRDTLRLEAGMNLYGQDMDETTNPLESGLAWTVDLKSERDFIGKQALLEKPVNQQLVGLVLLDKGVLRNHQKIITQHEGIAGEGEITSGGFSPTLNQSIALARIPVGIAAGEQVHVVVRDKQLAARVVKYPFVRNGQALI.

This sequence belongs to the GcvT family. In terms of assembly, the glycine cleavage system is composed of four proteins: P, T, L and H.

It catalyses the reaction N(6)-[(R)-S(8)-aminomethyldihydrolipoyl]-L-lysyl-[protein] + (6S)-5,6,7,8-tetrahydrofolate = N(6)-[(R)-dihydrolipoyl]-L-lysyl-[protein] + (6R)-5,10-methylene-5,6,7,8-tetrahydrofolate + NH4(+). Functionally, the glycine cleavage system catalyzes the degradation of glycine. This is Aminomethyltransferase from Nitrosomonas eutropha (strain DSM 101675 / C91 / Nm57).